Consider the following 288-residue polypeptide: Light-independent protochlorophyllide reductase iron-sulfur ATP-binding protein (288 aa).

ATP contacts are provided by residues 10–15 and Lys39; that span reads GIGKST. Ser14 contacts Mg(2+). [4Fe-4S] cluster contacts are provided by Cys95 and Cys129. Residues 180–181 and 204–206 each bind ATP; these read NR and PLL.

Belongs to the NifH/BchL/ChlL family. As to quaternary structure, homodimer. Protochlorophyllide reductase is composed of three subunits; ChlL, ChlN and ChlB. The cofactor is [4Fe-4S] cluster.

Its subcellular location is the plastid. It is found in the chloroplast. It carries out the reaction chlorophyllide a + oxidized 2[4Fe-4S]-[ferredoxin] + 2 ADP + 2 phosphate = protochlorophyllide a + reduced 2[4Fe-4S]-[ferredoxin] + 2 ATP + 2 H2O. The protein operates within porphyrin-containing compound metabolism; chlorophyll biosynthesis (light-independent). In terms of biological role, component of the dark-operative protochlorophyllide reductase (DPOR) that uses Mg-ATP and reduced ferredoxin to reduce ring D of protochlorophyllide (Pchlide) to form chlorophyllide a (Chlide). This reaction is light-independent. The L component serves as a unique electron donor to the NB-component of the complex, and binds Mg-ATP. In Stigeoclonium helveticum (Green alga), this protein is Light-independent protochlorophyllide reductase iron-sulfur ATP-binding protein.